Reading from the N-terminus, the 654-residue chain is NADPH-dependent diflavin oxidoreductase 1 (654 aa).

One can recognise a Flavodoxin-like domain in the interval 14–166; sequence ALVLYGSETG…TFIPWITDFR (153 aa). FMN-binding positions include 20-25, 75-78, and 113-122; these read SETGNA, STTG, and LGDSSYPKFN. An FAD-binding FR-type domain is found at 235-485; it reads PDALTATLVE…QLQRGGLSSS (251 aa). Residues R389, 419-422, and 458-461 contribute to the FAD site; these read RQFS and GVCT. Residues T500, 568 to 569, and 574 to 578 contribute to the NADP(+) site; these read SR and KIYVQ. W654 provides a ligand contact to FAD.

The protein belongs to the NADPH-dependent diflavin oxidoreductase NDOR1 family. It in the N-terminal section; belongs to the flavodoxin family. In the C-terminal section; belongs to the flavoprotein pyridine nucleotide cytochrome reductase family. Interacts with dre2; as part of the cytosolic iron-sulfur (Fe-S) protein assembly (CIA) machinery. FAD serves as cofactor. The cofactor is FMN.

It localises to the cytoplasm. The protein resides in the mitochondrion. It carries out the reaction 2 oxidized [2Fe-2S]-[protein] + NADPH = 2 reduced [2Fe-2S]-[protein] + NADP(+) + H(+). In terms of biological role, NADPH-dependent reductase which is a central component of the cytosolic iron-sulfur (Fe-S) protein assembly (CIA) machinery. Transfers electrons from NADPH via its FAD and FMN prosthetic groups to the [2Fe-2S] cluster of dre2, another key component of the CIA machinery. In turn, this reduced cluster provides electrons for assembly of cytosolic iron-sulfur cluster proteins. Positively controls H(2)O(2)-induced cell death. This chain is NADPH-dependent diflavin oxidoreductase 1, found in Aspergillus fumigatus (strain ATCC MYA-4609 / CBS 101355 / FGSC A1100 / Af293) (Neosartorya fumigata).